A 264-amino-acid chain; its full sequence is Secretory carrier-associated membrane protein 4 (264 aa).

The interval 1–33 (MNRHHDPNPFDEDEEIVNPFSKGGGRVPAASRP) is disordered. Over 1-122 (MNRHHDPNPF…AQKLQYLAFA (122 aa)) the chain is Cytoplasmic. The stretch at 51 to 85 (MNDSSQKQRKLADWEAELRKKEMDIKRREEAIAKF) forms a coiled coil. A run of 4 helical transmembrane segments spans residues 123–143 (SWLG…VCWI), 150–170 (IFFL…VLWY), 185–205 (FGWF…AAIA), and 233–253 (IFYF…LWVL). The Cytoplasmic segment spans residues 254–264 (QKIYLYFRGNK).

This sequence belongs to the SCAMP family.

Its subcellular location is the cell membrane. The protein resides in the cytoplasmic vesicle. The protein localises to the secretory vesicle membrane. In terms of biological role, probably involved in membrane trafficking. This is Secretory carrier-associated membrane protein 4 (SCAMP4) from Arabidopsis thaliana (Mouse-ear cress).